The chain runs to 123 residues: uncharacterized protein (123 aa).

Residues 31–57 (KLRTEAKKSKDKERTKEKEKHESLAKE) are compositionally biased toward basic and acidic residues. The interval 31–58 (KLRTEAKKSKDKERTKEKEKHESLAKEK) is disordered. A helical membrane pass occupies residues 91–111 (IIIFLLILLVSGLMVGIFFGI).

It is found in the membrane. This is an uncharacterized protein from Mycoplasma genitalium (strain ATCC 33530 / DSM 19775 / NCTC 10195 / G37) (Mycoplasmoides genitalium).